Consider the following 723-residue polypeptide: Polyribonucleotide nucleotidyltransferase (723 aa).

The Mg(2+) site is built by aspartate 487 and aspartate 493. Residues 554 to 613 form the KH domain; it reads PKILIMHINPDKIREVIGPSGKQINKIIDETGVKIDIEQDGTIFISSVDEAANQKAKQII. An S1 motif domain is found at 623 to 691; it reads GQVYLGKVKR…KQGRVNLSRK (69 aa). Residues 702–723 form a disordered region; the sequence is GELPRESREKRGRRPERHRMKP. Over residues 711-723 the composition is skewed to basic residues; it reads KRGRRPERHRMKP.

The protein belongs to the polyribonucleotide nucleotidyltransferase family. The cofactor is Mg(2+).

The protein localises to the cytoplasm. The catalysed reaction is RNA(n+1) + phosphate = RNA(n) + a ribonucleoside 5'-diphosphate. Its function is as follows. Involved in mRNA degradation. Catalyzes the phosphorolysis of single-stranded polyribonucleotides processively in the 3'- to 5'-direction. This Geobacillus kaustophilus (strain HTA426) protein is Polyribonucleotide nucleotidyltransferase.